We begin with the raw amino-acid sequence, 167 residues long: Cofilin-2 (167 aa).

Residues 4 to 153 enclose the ADF-H domain; that stretch reads GVTVNDEVIK…KDRCTLADKL (150 aa). Residues 30 to 34 carry the Nuclear localization signal motif; sequence KKRKK.

This sequence belongs to the actin-binding proteins ADF family.

The protein resides in the nucleus matrix. It is found in the cytoplasm. It localises to the cytoskeleton. Functionally, controls reversibly actin polymerization and depolymerization in a pH-sensitive manner. It has the ability to bind G- and F-actin in a 1:1 ratio of cofilin to actin. It is the major component of intranuclear and cytoplasmic actin rods. The polypeptide is Cofilin-2 (cfl2) (Xenopus tropicalis (Western clawed frog)).